Here is a 153-residue protein sequence, read N- to C-terminus: Large ribosomal subunit protein uL22 (153 aa).

A disordered region spans residues 125 to 153 (EPKEARQARKKAKSGRPAAAAKSETEKGA).

Belongs to the universal ribosomal protein uL22 family. As to quaternary structure, part of the 50S ribosomal subunit.

Functionally, this protein binds specifically to 23S rRNA; its binding is stimulated by other ribosomal proteins, e.g. L4, L17, and L20. It is important during the early stages of 50S assembly. It makes multiple contacts with different domains of the 23S rRNA in the assembled 50S subunit and ribosome. Its function is as follows. The globular domain of the protein is located near the polypeptide exit tunnel on the outside of the subunit, while an extended beta-hairpin is found that lines the wall of the exit tunnel in the center of the 70S ribosome. This chain is Large ribosomal subunit protein uL22, found in Cutibacterium acnes (strain DSM 16379 / KPA171202) (Propionibacterium acnes).